The sequence spans 95 residues: MEMARAHLFIRGKVQGVFFRQSMKEVATRNGVRGWVRNRSDGRTVEAVLEGPRDAVLKVIEWARVGPPGARVEDVEVRWEEYKGEFQDFRILPTF.

An Acylphosphatase-like domain is found at 5 to 93 (RAHLFIRGKV…GEFQDFRILP (89 aa)). Active-site residues include Arg20 and Asn38.

The protein belongs to the acylphosphatase family.

The catalysed reaction is an acyl phosphate + H2O = a carboxylate + phosphate + H(+). The chain is Acylphosphatase (acyP) from Pyrobaculum arsenaticum (strain DSM 13514 / JCM 11321 / PZ6).